Here is a 396-residue protein sequence, read N- to C-terminus: Squamosa promoter-binding-like protein 10 (396 aa).

The interval 74-104 (QSTSINSSSPEDKRCNLASQSSPGDSSSNID) is disordered. A compositionally biased stretch (polar residues) spans 90–104 (LASQSSPGDSSSNID). The segment at 173-250 (VPRCQIDGCE…SHHNARRRKP (78 aa)) adopts an SBP-type zinc-finger fold. Residues Cys176, Cys181, Cys198, His201, Cys217, Cys220, His224, and Cys236 each coordinate Zn(2+). The short motif at 233–249 (KRSCRKRLSHHNARRRK) is the Bipartite nuclear localization signal element.

It depends on Zn(2+) as a cofactor.

The protein localises to the nucleus. Its function is as follows. Trans-acting factor that binds specifically to the consensus nucleotide sequence 5'-TNCGTACAA-3'. The chain is Squamosa promoter-binding-like protein 10 (SPL10) from Arabidopsis thaliana (Mouse-ear cress).